The sequence spans 302 residues: L-threonate dehydrogenase (302 aa).

NAD(+) contacts are provided by residues 7–35 (FHVG…TWGA) and T102. K178 is a catalytic residue. K246 serves as a coordination point for NAD(+).

Belongs to the HIBADH-related family. L-threonate dehydrogenase subfamily.

It carries out the reaction L-threonate + NAD(+) = 2-dehydro-L-erythronate + NADH + H(+). In terms of biological role, catalyzes oxidation of L-threonate to 2-oxo-tetronate. Can use either NAD(+) or NADP(+) as cosubstrate, with a preference for NAD(+). The sequence is that of L-threonate dehydrogenase from Escherichia coli O6:H1 (strain CFT073 / ATCC 700928 / UPEC).